Reading from the N-terminus, the 141-residue chain is Nucleoside diphosphate kinase (141 aa).

Positions 9, 57, 85, 91, 102, and 112 each coordinate ATP. The active-site Pros-phosphohistidine intermediate is His-115.

This sequence belongs to the NDK family. In terms of assembly, homotetramer. Mg(2+) serves as cofactor.

It localises to the cytoplasm. It catalyses the reaction a 2'-deoxyribonucleoside 5'-diphosphate + ATP = a 2'-deoxyribonucleoside 5'-triphosphate + ADP. It carries out the reaction a ribonucleoside 5'-diphosphate + ATP = a ribonucleoside 5'-triphosphate + ADP. Its function is as follows. Major role in the synthesis of nucleoside triphosphates other than ATP. The ATP gamma phosphate is transferred to the NDP beta phosphate via a ping-pong mechanism, using a phosphorylated active-site intermediate. The protein is Nucleoside diphosphate kinase of Chlamydia trachomatis serovar A (strain ATCC VR-571B / DSM 19440 / HAR-13).